We begin with the raw amino-acid sequence, 203 residues long: Large ribosomal subunit protein uL13 (203 aa).

Ala2 bears the N-acetylalanine mark. A Citrulline modification is found at Arg59. Ser77 is subject to Phosphoserine. Arg140 carries the citrulline modification. Lys191 carries the post-translational modification N6-acetyllysine.

It belongs to the universal ribosomal protein uL13 family. In terms of assembly, component of the 60S ribosome. Component of the GAIT complex. Interacts with EIF4G1. Phosphorylation at Ser-77 upon interferon-gamma treatment in macrophages involves a DAPK1-DAPK3 kinase cascade and is causing release from the ribosome, association with the GAIT complex and subsequent involvement in transcript-selective translation inhibition. Post-translationally, citrullinated by PADI4.

The protein localises to the cytoplasm. Its function is as follows. Associated with ribosomes but is not required for canonical ribosome function and has extra-ribosomal functions. Component of the GAIT (gamma interferon-activated inhibitor of translation) complex which mediates interferon-gamma-induced transcript-selective translation inhibition in inflammation processes. Upon interferon-gamma activation and subsequent phosphorylation dissociates from the ribosome and assembles into the GAIT complex which binds to stem loop-containing GAIT elements in the 3'-UTR of diverse inflammatory mRNAs (such as ceruplasmin) and suppresses their translation. In the GAIT complex interacts with m7G cap-bound eIF4G at or near the eIF3-binding site and blocks the recruitment of the 43S ribosomal complex. Involved in methylation of rRNA. This chain is Large ribosomal subunit protein uL13 (RPL13A), found in Bos taurus (Bovine).